We begin with the raw amino-acid sequence, 197 residues long: Phosphoheptose isomerase (197 aa).

The 161-residue stretch at 37–197 folds into the SIS domain; sequence MLQCLMNDGK…CIDSVLLEGM (161 aa). Residue 52–54 coordinates substrate; it reads NGG. Zn(2+) is bound by residues histidine 61 and glutamate 65. Substrate is bound by residues glutamate 65, 94–95, 120–122, serine 125, and glutamine 175; these read ND and STS. The Zn(2+) site is built by glutamine 175 and histidine 183.

It belongs to the SIS family. GmhA subfamily. Homotetramer. Zn(2+) serves as cofactor.

Its subcellular location is the cytoplasm. It catalyses the reaction 2 D-sedoheptulose 7-phosphate = D-glycero-alpha-D-manno-heptose 7-phosphate + D-glycero-beta-D-manno-heptose 7-phosphate. It functions in the pathway carbohydrate biosynthesis; D-glycero-D-manno-heptose 7-phosphate biosynthesis; D-glycero-alpha-D-manno-heptose 7-phosphate and D-glycero-beta-D-manno-heptose 7-phosphate from sedoheptulose 7-phosphate: step 1/1. The protein operates within bacterial outer membrane biogenesis; LOS core biosynthesis. Catalyzes the isomerization of sedoheptulose 7-phosphate in D-glycero-D-manno-heptose 7-phosphate. This is Phosphoheptose isomerase from Neisseria meningitidis serogroup A / serotype 4A (strain DSM 15465 / Z2491).